The primary structure comprises 243 residues: Vesicle-associated membrane protein-associated protein B (243 aa).

N-acetylalanine is present on alanine 2. The Cytoplasmic portion of the chain corresponds to 2-218; the sequence is AKVEQVLSLE…PAPATPGKEE (217 aa). One can recognise an MSP domain in the interval 7-124; the sequence is VLSLEPQHEL…MDSKLRCVFE (118 aa). Serine 146 bears the Phosphoserine mark. Lysine 147 participates in a covalent cross-link: Glycyl lysine isopeptide (Lys-Gly) (interchain with G-Cter in SUMO1). The residue at position 150 (threonine 150) is a Phosphothreonine. A phosphoserine mark is found at serine 158 and serine 159. Residues 161-196 are a coiled coil; that stretch reads LDDTEVKKVMEECKRLQSEVQRLREENKQLKEEDGL. Basic and acidic residues predominate over residues 185–197; that stretch reads EENKQLKEEDGLR. Residues 185 to 217 are disordered; it reads EENKQLKEEDGLRMRKPVLSNSPAPAPATPGKE. Serine 206 is subject to Phosphoserine. A helical; Anchor for type IV membrane protein membrane pass occupies residues 219-239; it reads GLSTRLLALVVLFFIVGVIIG.

This sequence belongs to the VAMP-associated protein (VAP) (TC 9.B.17) family. In terms of assembly, homodimer, and heterodimer with VAPA. Interacts with VAMP1 and VAMP2. Interacts (via MSP domain) with ZFYVE27. Interacts with RMDN3. Interacts with KIF5A in a ZFYVE27-dependent manner. Interacts (via MSP domain) with STARD3 (via phospho-FFAT motif). Interacts with STARD3NL (via FFAT motif). Interacts with CERT1. Interacts with PLEKHA3 and SACM1L to form a ternary complex. Interacts with VPS13A (via FFAT motif). Interacts with RB1CC1 (via phosphorylated FFAT motif), MIGA2 (via phosphorylated FFAT motif), RMDN3 (via phosphorylated FFAT motif), OSBPL1A (via FFAT motif), KCNB1 (via phosphorylated FFAT motif) and KCNB2 (via phosphorylated FFAT motif). Interacts (via MSP domain) with WDR44 (via FFAT motif); the interactions connect the endoplasmic reticulum (ER) with the endosomal tubule.

It is found in the endoplasmic reticulum membrane. Functionally, endoplasmic reticulum (ER)-anchored protein that mediates the formation of contact sites between the ER and endosomes via interaction with FFAT motif-containing proteins such as STARD3 or WDR44. Interacts with STARD3 in a FFAT motif phosphorylation dependent manner. Via interaction with WDR44 participates in neosynthesized protein export. Participates in the endoplasmic reticulum unfolded protein response (UPR) by inducing ERN1/IRE1 activity. Involved in cellular calcium homeostasis regulation. This is Vesicle-associated membrane protein-associated protein B from Sus scrofa (Pig).